Here is a 20-residue protein sequence, read N- to C-terminus: Pregnancy-associated glycoprotein 67A (20 aa).

N-linked (GlcNAc...) asparagine glycans are attached at residues Asn-4 and Asn-20.

This sequence belongs to the peptidase A1 family. As to expression, chorionic epithelium (trophectoderm) and placental cotyledons.

It localises to the secreted. It is found in the extracellular space. In Bison bonasus (European bison), this protein is Pregnancy-associated glycoprotein 67A.